Here is a 545-residue protein sequence, read N- to C-terminus: tRNA-2-methylthio-N(6)-dimethylallyladenosine synthase (545 aa).

Positions 1–32 (MSSASPLARCCDEATPSAGPRAAQPPYHGPVT) are disordered. The region spanning 58 to 174 (RTYQVRTYGC…LPTLLERARH (117 aa)) is the MTTase N-terminal domain. [4Fe-4S] cluster is bound by residues Cys67, Cys103, Cys137, Cys211, Cys215, and Cys218. One can recognise a Radical SAM core domain in the interval 197 to 433 (RESAYAAWVS…IALQEQISLE (237 aa)). The TRAM domain maps to 436-504 (RALVGQAVEV…PHHLIADAGV (69 aa)).

This sequence belongs to the methylthiotransferase family. MiaB subfamily. As to quaternary structure, monomer. [4Fe-4S] cluster is required as a cofactor.

It is found in the cytoplasm. The catalysed reaction is N(6)-dimethylallyladenosine(37) in tRNA + (sulfur carrier)-SH + AH2 + 2 S-adenosyl-L-methionine = 2-methylsulfanyl-N(6)-dimethylallyladenosine(37) in tRNA + (sulfur carrier)-H + 5'-deoxyadenosine + L-methionine + A + S-adenosyl-L-homocysteine + 2 H(+). Its function is as follows. Catalyzes the methylthiolation of N6-(dimethylallyl)adenosine (i(6)A), leading to the formation of 2-methylthio-N6-(dimethylallyl)adenosine (ms(2)i(6)A) at position 37 in tRNAs that read codons beginning with uridine. The polypeptide is tRNA-2-methylthio-N(6)-dimethylallyladenosine synthase (Mycobacterium bovis (strain BCG / Pasteur 1173P2)).